The following is a 797-amino-acid chain: Probable DNA polymerase (797 aa).

This sequence belongs to the DNA polymerase type-B family.

The protein localises to the mitochondrion. It catalyses the reaction DNA(n) + a 2'-deoxyribonucleoside 5'-triphosphate = DNA(n+1) + diphosphate. The sequence is that of Probable DNA polymerase from Agaricus bitorquis (Pavement mushroom).